Consider the following 268-residue polypeptide: 4-hydroxy-tetrahydrodipicolinate reductase (268 aa).

NAD(+) is bound by residues 8-13 (GGGGKM) and Glu34. Lys35 contacts NADP(+). Residues 98 to 100 (GST) and 122 to 125 (APNM) contribute to the NAD(+) site. Catalysis depends on His155, which acts as the Proton donor/acceptor. His156 lines the (S)-2,3,4,5-tetrahydrodipicolinate pocket. Lys159 acts as the Proton donor in catalysis. 165–166 (GT) contributes to the (S)-2,3,4,5-tetrahydrodipicolinate binding site.

This sequence belongs to the DapB family.

The protein localises to the cytoplasm. It catalyses the reaction (S)-2,3,4,5-tetrahydrodipicolinate + NAD(+) + H2O = (2S,4S)-4-hydroxy-2,3,4,5-tetrahydrodipicolinate + NADH + H(+). The catalysed reaction is (S)-2,3,4,5-tetrahydrodipicolinate + NADP(+) + H2O = (2S,4S)-4-hydroxy-2,3,4,5-tetrahydrodipicolinate + NADPH + H(+). It functions in the pathway amino-acid biosynthesis; L-lysine biosynthesis via DAP pathway; (S)-tetrahydrodipicolinate from L-aspartate: step 4/4. Functionally, catalyzes the conversion of 4-hydroxy-tetrahydrodipicolinate (HTPA) to tetrahydrodipicolinate. The chain is 4-hydroxy-tetrahydrodipicolinate reductase from Syntrophus aciditrophicus (strain SB).